The chain runs to 546 residues: Chaperonin GroEL 2 (546 aa).

ATP contacts are provided by residues 30–33 (TLGP), K51, 87–91 (DGTTT), G415, 479–481 (NAA), and D495.

The protein belongs to the chaperonin (HSP60) family. In terms of assembly, forms a cylinder of 14 subunits composed of two heptameric rings stacked back-to-back. Interacts with the co-chaperonin GroES.

The protein resides in the cytoplasm. The catalysed reaction is ATP + H2O + a folded polypeptide = ADP + phosphate + an unfolded polypeptide.. Its function is as follows. Together with its co-chaperonin GroES, plays an essential role in assisting protein folding. The GroEL-GroES system forms a nano-cage that allows encapsulation of the non-native substrate proteins and provides a physical environment optimized to promote and accelerate protein folding. The protein is Chaperonin GroEL 2 of Chromobacterium violaceum (strain ATCC 12472 / DSM 30191 / JCM 1249 / CCUG 213 / NBRC 12614 / NCIMB 9131 / NCTC 9757 / MK).